A 106-amino-acid chain; its full sequence is UPF0060 membrane protein Csal_2746 (106 aa).

4 consecutive transmembrane segments (helical) span residues 6 to 26 (LLFI…WLWL), 31 to 51 (SPWL…LLSL), 59 to 79 (VYAA…WGVD), and 85 to 105 (PTDW…ASGW).

It belongs to the UPF0060 family.

It localises to the cell inner membrane. The sequence is that of UPF0060 membrane protein Csal_2746 from Chromohalobacter salexigens (strain ATCC BAA-138 / DSM 3043 / CIP 106854 / NCIMB 13768 / 1H11).